Consider the following 741-residue polypeptide: MEHTYQYAWVIPLLPLPVIMSMGFGLFFIPTATRNLRRIWAFPSVLFLSIAMVFSIQLSIQQINGSSIYQYLWSWTVNNDFSLEFGYLIDPLTSIMLILITTVGILVLIYSDGYMSHDEGYLRFFVYISFFTTSMLGLVTSSNLIQIYFFWELVGMCSYLLIGFWFTRPIAASACQKAFVTNRVGDFGLLLGILGFFWITGSLEFRDLFKIANNWIPNNGINSLLTTLCAFLLFLGAVAKSAQFPLHVWLPDAMEGPTPISALIHAATMVAAGIFLLARLFPLFISLPLIMTLISLVGTITLFLGATLAIAQRDIKRSLAYSTMSQLGYMMLALGIGSYQAALFHLITHAYSKALLFLGSGSIIHSMEPLVGYSPEKSQNMVLMGGLRKYIPITRTTFLWGTLSLCGIPPLACFWSKDEILSNSWLYSPFFGIIASFTAGLTAFYMFRIYLLTFDGYLRVHFQNYSTTKEGYLYSISLWGKKIPKRVNRDFILSTTKNGVAFFSQKRPKMKGNTRNRIGYFSTSFGAKNTFAYPHEMGNTMLFPLLILLLFTLFIGFIGISFDNGAMDNGIAELTLLSKWLTPSINLTQESSNSSINSYEFLTNAISSVSLAIFGLFIAYILYGSPYSFFQNLDLINSFYKESPKKYFFFLDQVKKKIYSWSYNRGYMDIFYTRVFTLGIRRLTELTEFFDKGIIDGITNGVGLVSFCIGEEIKYVGGGRISSYLFFFLCYVSVFLFFFIS.

Helical transmembrane passes span 9-29 (WVIP…LFFI), 39-59 (IWAF…IQLS), 89-109 (IDPL…LVLI), 125-145 (FVYI…SNLI), 147-167 (IYFF…FWFT), 185-205 (GDFG…SLEF), 219-239 (NGIN…GAVA), 258-278 (TPIS…FLLA), 280-300 (LFPL…VGTI), 327-347 (LGYM…FHLI), 354-374 (ALLF…VGYS), 396-416 (TTFL…CFWS), 425-445 (WLYS…TAFY), 542-562 (LFPL…GISF), 605-625 (AISS…LYGS), and 721-741 (ISSY…FFIS).

It belongs to the complex I subunit 5 family. As to quaternary structure, NDH is composed of at least 16 different subunits, 5 of which are encoded in the nucleus.

It is found in the plastid. Its subcellular location is the chloroplast thylakoid membrane. The enzyme catalyses a plastoquinone + NADH + (n+1) H(+)(in) = a plastoquinol + NAD(+) + n H(+)(out). It carries out the reaction a plastoquinone + NADPH + (n+1) H(+)(in) = a plastoquinol + NADP(+) + n H(+)(out). Functionally, NDH shuttles electrons from NAD(P)H:plastoquinone, via FMN and iron-sulfur (Fe-S) centers, to quinones in the photosynthetic chain and possibly in a chloroplast respiratory chain. The immediate electron acceptor for the enzyme in this species is believed to be plastoquinone. Couples the redox reaction to proton translocation, and thus conserves the redox energy in a proton gradient. This Lolium perenne (Perennial ryegrass) protein is NAD(P)H-quinone oxidoreductase subunit 5, chloroplastic (ndhF).